The primary structure comprises 166 residues: Large ribosomal subunit protein uL10 (166 aa).

This sequence belongs to the universal ribosomal protein uL10 family. In terms of assembly, part of the ribosomal stalk of the 50S ribosomal subunit. The N-terminus interacts with L11 and the large rRNA to form the base of the stalk. The C-terminus forms an elongated spine to which L12 dimers bind in a sequential fashion forming a multimeric L10(L12)X complex.

Forms part of the ribosomal stalk, playing a central role in the interaction of the ribosome with GTP-bound translation factors. The polypeptide is Large ribosomal subunit protein uL10 (Bacillus velezensis (strain DSM 23117 / BGSC 10A6 / LMG 26770 / FZB42) (Bacillus amyloliquefaciens subsp. plantarum)).